A 782-amino-acid polypeptide reads, in one-letter code: Protein PAT1 homolog 1 (782 aa).

Disordered stretches follow at residues 96 to 153, 177 to 217, 332 to 372, and 460 to 481; these read GPKH…HSKP, LPES…YSAP, VREH…SKHM, and EVDS…GKHL. Low complexity predominate over residues 108 to 117; it reads SGSFSRESSS. Positions 208–217 are enriched in polar residues; sequence GGSQLTYSAP. Basic residues predominate over residues 335-347; sequence HKHKSSHRSRKNR. The segment covering 348–366 has biased composition (polar residues); sequence GLSQQTSDAASQKSETGLQ. The span at 471–481 shows a compositional bias: basic and acidic residues; sequence SGDHKGSGKHL.

As to quaternary structure, interacts with AFPH2/NINJA. In terms of tissue distribution, expressed in root vasculature, shoot apical meristem (SAM) and leaves.

Functionally, activator of mRNA decapping. Involved in mRNA decay via decapping. Involved in the regulation of root stem cell niche identity. Maintains root stem cell niche stability through the interaction with the negative regulator of jasmonate signaling AFPH2/NINJA, and the regulation of cell division. This chain is Protein PAT1 homolog 1, found in Arabidopsis thaliana (Mouse-ear cress).